Here is a 443-residue protein sequence, read N- to C-terminus: Methionine aminopeptidase 2-1 (443 aa).

Positions 1-90 are disordered; the sequence is MAAQADDELN…RVPVSELFPN (90 aa). Acidic residues predominate over residues 33–48; the sequence is ADNDDSEDDEKEEEGG. Residues 58–73 are compositionally biased toward basic residues; sequence KKKKKRKPKKKKKGGA. His-196 lines the substrate pocket. 3 residues coordinate a divalent metal cation: Asp-216, Asp-227, and His-296. His-304 provides a ligand contact to substrate. A divalent metal cation is bound by residues Glu-329 and Glu-424.

The protein belongs to the peptidase M24A family. Methionine aminopeptidase eukaryotic type 2 subfamily. It depends on Co(2+) as a cofactor. Zn(2+) serves as cofactor. Mn(2+) is required as a cofactor. Requires Fe(2+) as cofactor.

It localises to the cytoplasm. The enzyme catalyses Release of N-terminal amino acids, preferentially methionine, from peptides and arylamides.. In terms of biological role, cotranslationally removes the N-terminal methionine from nascent proteins. The N-terminal methionine is often cleaved when the second residue in the primary sequence is small and uncharged (Met-Ala-, Cys, Gly, Pro, Ser, Thr, or Val). This Talaromyces stipitatus (strain ATCC 10500 / CBS 375.48 / QM 6759 / NRRL 1006) (Penicillium stipitatum) protein is Methionine aminopeptidase 2-1.